The following is a 1169-amino-acid chain: Flocculation protein FLO10 (1169 aa).

Positions 1-24 (MPVAARYIFLTGLFLLSVANVALG) are cleaved as a signal peptide. Residues 111–271 (PVKRGVKLCS…GTEVNDDFEG (161 aa)) form the PA14 domain. N-linked (GlcNAc...) asparagine glycosylation is found at N122, N157, and N279. 10 tandem repeats follow at residues 303 to 326 (SSWS…VTPY), 330 to 356 (SSWS…YVTS), 357 to 383 (SSSS…YVSS), 384 to 419 (STAA…YVTS), 420 to 446 (SSWS…YVSS), 447 to 482 (STAA…YVTS), 483 to 509 (SSSS…YVSS), 510 to 545 (STAA…YVTS), 546 to 572 (SSWS…YVSS), and 573 to 608 (STAA…YATS). Residues 303–572 (SSWSSSEVCT…TSYVTPYVSS (270 aa)) form a 6 X 27 AA approximate repeats, Ser/Thr-rich region. The segment at 384 to 608 (STAAANYTSS…TSTSTPYATS (225 aa)) is 4 X 36 AA approximate repeats, Ser/Thr-rich. An N-linked (GlcNAc...) asparagine glycan is attached at N389. N452 is a glycosylation site (N-linked (GlcNAc...) asparagine). The N-linked (GlcNAc...) asparagine glycan is linked to N515. Residues N578, N656, and N686 are each glycosylated (N-linked (GlcNAc...) asparagine). A compositionally biased stretch (low complexity) spans 798–819 (TKVSSSESSESHRTSPTTSSES). 3 disordered regions span residues 798 to 837 (TKVS…SSFS), 856 to 920 (TPSS…SRDR), and 1070 to 1107 (RNNN…EAVS). The segment covering 856 to 884 (TPSSPISTVAPRSTGLNSQTESTNSSKET) has biased composition (polar residues). N879 carries an N-linked (GlcNAc...) asparagine glycan. A compositionally biased stretch (low complexity) spans 886 to 902 (SSENSASVMPSSSATSP). Residues 906–916 (KVTSDETSSGF) show a composition bias toward polar residues. Positions 1077–1107 (TSGTTSIETHTTTTSNASENSDNVSASEAVS) are enriched in low complexity. N-linked (GlcNAc...) asparagine glycans are attached at residues N1092 and N1099. A lipid anchor (GPI-anchor amidated glycine) is attached at G1146. Positions 1147-1169 (IANHLLTNSGISIFIASLLLAIV) are cleaved as a propeptide — removed in mature form.

Belongs to the flocculin family. Post-translationally, extensively O-glycosylated. The GPI-anchor is attached to the protein in the endoplasmic reticulum and serves to target the protein to the cell surface. There, the glucosamine-inositol phospholipid moiety is cleaved off and the GPI-modified mannoprotein is covalently attached via its lipidless GPI glycan remnant to the 1,6-beta-glucan of the outer cell wall layer.

Its subcellular location is the secreted. The protein localises to the cell wall. It is found in the membrane. Cell wall protein that participates directly in adhesive cell-cell interactions during yeast flocculation, a reversible, asexual and Ca(2+)-dependent process in which cells adhere to form aggregates (flocs) consisting of thousands of cells. The lectin-like protein sticks out of the cell wall of flocculent cells and selectively binds mannose residues in the cell walls of adjacent cells. Activity is inhibited by mannose, glucose, maltose and sucrose. Also involved in cell-substrate adhesion, haploid invasive growth and diploid pseudohyphae formation. The protein is Flocculation protein FLO10 (FLO10) of Saccharomyces cerevisiae (strain ATCC 204508 / S288c) (Baker's yeast).